Consider the following 172-residue polypeptide: RNA silencing suppressor p19 (172 aa).

Residues 1 to 20 are compositionally biased toward basic and acidic residues; sequence MERVIQGNDAREQANGERWD. A disordered region spans residues 1-37; the sequence is MERVIQGNDAREQANGERWDGGSGGTTSGFKLPDESP.

The protein belongs to the tombusvirus protein p19 family. As to quaternary structure, homodimer.

Functionally, viral suppressor of RNA silencing which binds specifically to silencing RNAs (siRNAs). Acts as a molecular caliper to specifically select siRNAs based on the length of the duplex region of the RNA. The polypeptide is RNA silencing suppressor p19 (Cynara cardunculus var. scolymus (Globe artichoke)).